We begin with the raw amino-acid sequence, 212 residues long: ATP phosphoribosyltransferase (212 aa).

It belongs to the ATP phosphoribosyltransferase family. Short subfamily. As to quaternary structure, heteromultimer composed of HisG and HisZ subunits.

The protein resides in the cytoplasm. The catalysed reaction is 1-(5-phospho-beta-D-ribosyl)-ATP + diphosphate = 5-phospho-alpha-D-ribose 1-diphosphate + ATP. It participates in amino-acid biosynthesis; L-histidine biosynthesis; L-histidine from 5-phospho-alpha-D-ribose 1-diphosphate: step 1/9. Functionally, catalyzes the condensation of ATP and 5-phosphoribose 1-diphosphate to form N'-(5'-phosphoribosyl)-ATP (PR-ATP). Has a crucial role in the pathway because the rate of histidine biosynthesis seems to be controlled primarily by regulation of HisG enzymatic activity. This chain is ATP phosphoribosyltransferase, found in Prochlorococcus marinus (strain AS9601).